The chain runs to 754 residues: Disintegrin and metalloproteinase domain-containing protein 32 (754 aa).

The first 22 residues, 1–22, serve as a signal peptide directing secretion; it reads MLGAMLHTLLLLLLAELGALLA. Serine 23 carries the post-translational modification Phosphoserine. A propeptide spanning residues 23-176 is cleaved from the precursor; the sequence is SGPESQSSFL…TNYGILINKK (154 aa). Asparagine 126 carries N-linked (GlcNAc...) asparagine glycosylation. Residues 177 to 689 lie on the Extracellular side of the membrane; the sequence is PKSPFKNLFP…ERASKNQEKK (513 aa). The 198-residue stretch at 187–384 folds into the Peptidase M12B domain; sequence LYLEMSIVVD…EGAKCLQNKP (198 aa). 4 disulfide bridges follow: cysteine 296-cysteine 379, cysteine 338-cysteine 363, cysteine 340-cysteine 345, and cysteine 454-cysteine 475. Asparagine 362, asparagine 469, asparagine 570, and asparagine 571 each carry an N-linked (GlcNAc...) asparagine glycan. A Disintegrin domain is found at 391-483; sequence AAVCGNGKVE…NCPPDVTINN (93 aa). Positions 628-660 constitute an EGF-like domain; it reads QSKTCSSKCHGNGVCNSHGVCHCNAGYSPPNCQ. 3 cysteine pairs are disulfide-bonded: cysteine 632/cysteine 642, cysteine 636/cysteine 648, and cysteine 650/cysteine 659. A helical transmembrane segment spans residues 690-710; the sequence is WLLSLYIVLIILASVFLIGTG. At 711-754 the chain is on the cytoplasmic side; sequence WKGLKQCGSKEEESMSSESKSEDSTYTYVSRSTSETSSMTSTSS. The segment covering 720-733 has biased composition (basic and acidic residues); that stretch reads KEEESMSSESKSED. Residues 720–754 are disordered; sequence KEEESMSSESKSEDSTYTYVSRSTSETSSMTSTSS. A compositionally biased stretch (low complexity) spans 734–754; sequence STYTYVSRSTSETSSMTSTSS.

Expressed in sperm (at protein level). Highly expressed in the testis and weakly expressed in the epididymis, brain and heart.

It localises to the membrane. In terms of biological role, may play a role in sperm development and fertilization This is a non-catalytic metalloprotease-like protein. The polypeptide is Disintegrin and metalloproteinase domain-containing protein 32 (Mus musculus (Mouse)).